A 1100-amino-acid polypeptide reads, in one-letter code: ATP-dependent DNA helicase mph1 (1100 aa).

Positions 1–21 (MSDSDDYLQDDPDDQAFDDFA) are enriched in acidic residues. Residues 1-250 (MSDSDDYLQD…RPSSFMQSSN (250 aa)) form a disordered region. Positions 38–61 (RNQTRNTTSRRNEDNSVASDSDSF) are enriched in low complexity. The span at 84-94 (FADHPENEASS) shows a compositional bias: basic and acidic residues. A compositionally biased stretch (polar residues) spans 104-117 (NNPQENIFVTQLTQ). Positions 135-146 (PPPPPPPAPTKP) are enriched in pro residues. Polar residues-rich tracts occupy residues 182-191 (RLSFSTAQNS) and 200-209 (NAPTNTAQTE). Over residues 212–223 (DFLDDIPDDAFD) the composition is skewed to acidic residues. Positions 237-249 (SNSSRPSSFMQSS) are enriched in low complexity. Residues 317–485 (ITQKGLFHNL…AVIDGLEISK (169 aa)) form the Helicase ATP-binding domain. 330 to 337 (LPTGLGKT) serves as a coordination point for ATP. The DEAH box signature appears at 433-436 (DEAH). Residues 655 to 829 (YLKQVVLNHF…GTRFTFHDDK (175 aa)) form the Helicase C-terminal domain. 2 disordered regions span residues 850–913 (PEEN…PEPV) and 1003–1100 (RRPA…LGRR). Basic residues-rich tracts occupy residues 863-875 (RRGR…PKKF) and 1019-1028 (GNKKRLRKGR). The segment covering 1053-1066 (QPISPEQLLSSFTD) has biased composition (polar residues). Positions 1082 to 1092 (LELDADFEAPD) are enriched in acidic residues.

It belongs to the DEAD box helicase family. DEAH subfamily. FANCM sub-subfamily. As to quaternary structure, interacts with the MHF histone-fold complex to form the FANCM-MHF complex.

The protein localises to the nucleus. The enzyme catalyses ATP + H2O = ADP + phosphate + H(+). Its function is as follows. ATP-dependent DNA helicase involved in DNA damage repair by homologous recombination and in genome maintenance. Capable of unwinding D-loops. Plays a role in limiting crossover recombinants during mitotic DNA double-strand break (DSB) repair. Component of a FANCM-MHF complex which promotes gene conversion at blocked replication forks, probably by reversal of the stalled fork. The chain is ATP-dependent DNA helicase mph1 from Aspergillus terreus (strain NIH 2624 / FGSC A1156).